Consider the following 472-residue polypeptide: Na(+)/H(+) antiporter NhaA 1 (472 aa).

11 consecutive transmembrane segments (helical) span residues Thr-34–Trp-54, Gly-86–Gly-106, Leu-116–Ala-136, Gly-146–Gly-166, Val-175–Phe-195, Thr-203–Phe-223, Ile-227–Ala-247, Pro-324–Asp-344, Val-353–Phe-373, Val-394–Leu-414, and Leu-428–Ile-448.

This sequence belongs to the NhaA Na(+)/H(+) (TC 2.A.33) antiporter family.

It localises to the cell inner membrane. It carries out the reaction Na(+)(in) + 2 H(+)(out) = Na(+)(out) + 2 H(+)(in). Its function is as follows. Na(+)/H(+) antiporter that extrudes sodium in exchange for external protons. The protein is Na(+)/H(+) antiporter NhaA 1 of Pseudoalteromonas atlantica (strain T6c / ATCC BAA-1087).